Here is a 300-residue protein sequence, read N- to C-terminus: Peroxisomal 2,4-dienoyl-CoA reductase [(3E)-enoyl-CoA-producing] (300 aa).

NADP(+) contacts are provided by residues 42–47 (GGGSGI), 67–71 (RNLEK), and aspartate 93. Arginine 67 serves as a coordination point for substrate. Substrate-binding positions include arginine 95, phenylalanine 125, and 133-135 (SFN). Residues lysine 189 and 215–221 (PGPISGT) contribute to the NADP(+) site. Arginine 226 is a substrate binding site. The Microbody targeting signal motif lies at 298–300 (AKL).

The protein belongs to the short-chain dehydrogenases/reductases (SDR) family. 2,4-dienoyl-CoA reductase subfamily. In terms of assembly, monomer, dimer and oligomer.

The protein localises to the peroxisome. It catalyses the reaction a (2E,4Z)-dienoyl-CoA + NADPH + H(+) = a 4,5-saturated-(3E)-enoyl-CoA + NADP(+). The enzyme catalyses a (2E,4E)-dienoyl-CoA + NADPH + H(+) = a 4,5-saturated-(3E)-enoyl-CoA + NADP(+). It carries out the reaction (2E,4E)-hexadienoyl-CoA + NADPH + H(+) = (3E)-hexenoyl-CoA + NADP(+). The catalysed reaction is (2E,4E)-decadienoyl-CoA + NADPH + H(+) = (3E)-decenoyl-CoA + NADP(+). It catalyses the reaction (2E,4Z,7Z,10Z,13Z,16Z,19Z)-docosaheptaenoyl-CoA + NADPH + H(+) = (3E,7Z,10Z,13Z,16Z,19Z)-docosahexaenoyl-CoA + NADP(+). Its function is as follows. Auxiliary enzyme of beta-oxidation. Participates in the degradation of unsaturated fatty enoyl-CoA esters having double bonds in both even- and odd-numbered positions in peroxisome. Catalyzes the NADP-dependent reduction of 2,4-dienoyl-CoA to yield trans-3-enoyl-CoA. This Danio rerio (Zebrafish) protein is Peroxisomal 2,4-dienoyl-CoA reductase [(3E)-enoyl-CoA-producing] (decr2).